The chain runs to 604 residues: Serine/threonine-protein phosphatase 2B catalytic subunit A2 (604 aa).

The tract at residues 21-48 is disordered; sequence NKTERPQSSTTPIDSKASTVAAANSTAT. Residue T31 is modified to Phosphothreonine. Residues 35–48 show a composition bias toward low complexity; it reads SKASTVAAANSTAT. Positions 144, 146, and 172 each coordinate Fe cation. Zn(2+) is bound by residues D172 and N204. The active-site Proton donor is H205. Zn(2+) contacts are provided by H253 and H359. The segment at 470–497 is disordered; sequence KKLPQAGKSEATPQPATSASPKHASILD. Positions 480–489 are enriched in polar residues; it reads ATPQPATSAS. S489 and S520 each carry phosphoserine. Residues 501–523 form a calmodulin-binding region; sequence RRKALRNKILAVAKVSRMYSVLR.

This sequence belongs to the PPP phosphatase family. PP-2B subfamily. In terms of assembly, composed of two components (A and B), the A component is the catalytic subunit and the B component confers calcium sensitivity. Requires Fe(3+) as cofactor. Zn(2+) is required as a cofactor.

The enzyme catalyses O-phospho-L-seryl-[protein] + H2O = L-seryl-[protein] + phosphate. It carries out the reaction O-phospho-L-threonyl-[protein] + H2O = L-threonyl-[protein] + phosphate. Calcium-dependent, calmodulin-stimulated protein phosphatase. This subunit may have a role in the calmodulin activation of calcineurin. The protein is Serine/threonine-protein phosphatase 2B catalytic subunit A2 (CMP2) of Saccharomyces cerevisiae (strain ATCC 204508 / S288c) (Baker's yeast).